The following is a 250-amino-acid chain: Solute carrier family 66 member 2 (250 aa).

Positions 14–80 (RMLVSWGASC…HHFESPLLWQ (67 aa)) constitute a PQ-loop 1 domain. A run of 6 helical transmembrane segments spans residues 15–35 (MLVSWGASCAMIFGGVVPYIP), 49–69 (FSIYVCLMLLIANILRILFWF), 72–92 (HFESPLLWQSIIMIVTMLLML), 118–138 (FFWHWTRFIDFIQCVLAFTGV), 151–173 (LFVEILGFLAVFTEALLGVPQLY), and 212–232 (FSICGLLQVFVDIAILLQVYL). The region spanning 149 to 215 (SPLFVEILGF…NQAPFQFSIC (67 aa)) is the PQ-loop 2 domain.

It is found in the membrane. This chain is Solute carrier family 66 member 2 (slc66a2), found in Xenopus laevis (African clawed frog).